Here is a 548-residue protein sequence, read N- to C-terminus: Chaperonin GroEL (548 aa).

ATP is bound by residues 30-33, K51, 87-91, G415, 479-481, and D495; these read TLGP, DGTTT, and NAA. The disordered stretch occupies residues 524-548; the sequence is LPKEDKSSDSSSSPAGGMGGMGGMM. Residues 539-548 show a composition bias toward gly residues; sequence GGMGGMGGMM.

It belongs to the chaperonin (HSP60) family. In terms of assembly, forms a cylinder of 14 subunits composed of two heptameric rings stacked back-to-back. Interacts with the co-chaperonin GroES.

It is found in the cytoplasm. The catalysed reaction is ATP + H2O + a folded polypeptide = ADP + phosphate + an unfolded polypeptide.. Functionally, together with its co-chaperonin GroES, plays an essential role in assisting protein folding. The GroEL-GroES system forms a nano-cage that allows encapsulation of the non-native substrate proteins and provides a physical environment optimized to promote and accelerate protein folding. The protein is Chaperonin GroEL of Buchnera aphidicola subsp. Acyrthosiphon pisum (strain 5A).